Here is a 189-residue protein sequence, read N- to C-terminus: UPF0494 membrane protein C977.06 (189 aa).

The next 3 membrane-spanning stretches (helical) occupy residues 78 to 98, 120 to 140, and 148 to 168; these read WPLL…NFEV, IWGP…GLIY, and AIPL…VAMV.

The protein belongs to the UPF0494 family.

It is found in the membrane. The chain is UPF0494 membrane protein C977.06 from Schizosaccharomyces pombe (strain 972 / ATCC 24843) (Fission yeast).